The chain runs to 398 residues: ATP-dependent RNA helicase eIF4A (398 aa).

The Q motif motif lies at 25–53 (DSFDSMELKPELLRGIYAYGFERPSAIQQ). The 171-residue stretch at 56–226 (ILPIIKGNDV…TKFMRDPVRI (171 aa)) folds into the Helicase ATP-binding domain. Position 69–76 (69–76 (AQSGTGKT)) interacts with ATP. The short motif at 174 to 177 (DEAD) is the DEAD box element. A Helicase C-terminal domain is found at 237–398 (GIKQFYIAVE…EMPMNVADLI (162 aa)).

The protein belongs to the DEAD box helicase family. eIF4A subfamily. As to quaternary structure, component of the eIF4F complex, which composition varies with external and internal environmental conditions. It is composed of at least eIF4A, eIF4E and eIF4G.

It localises to the cytoplasm. The catalysed reaction is ATP + H2O = ADP + phosphate + H(+). Functionally, ATP-dependent RNA helicase which is a subunit of the eIF4F complex involved in cap recognition and is required for mRNA binding to ribosome. In the current model of translation initiation, eIF4A unwinds RNA secondary structures in the 5'-UTR of mRNAs which is necessary to allow efficient binding of the small ribosomal subunit, and subsequent scanning for the initiator codon. In Neosartorya fischeri (strain ATCC 1020 / DSM 3700 / CBS 544.65 / FGSC A1164 / JCM 1740 / NRRL 181 / WB 181) (Aspergillus fischerianus), this protein is ATP-dependent RNA helicase eIF4A (tif1).